The following is a 581-amino-acid chain: Pyridine nucleotide-disulfide oxidoreductase domain-containing protein 2 (581 aa).

Residue V38 to G71 participates in FAD binding.

It belongs to the carotenoid/retinoid oxidoreductase family. As to quaternary structure, interacts with COX5B; this interaction may contribute to localize PYROXD2 to the inner face of the inner mitochondrial membrane.

The protein localises to the mitochondrion matrix. Probable oxidoreductase that may play a role as regulator of mitochondrial function. The chain is Pyridine nucleotide-disulfide oxidoreductase domain-containing protein 2 from Pongo abelii (Sumatran orangutan).